A 341-amino-acid chain; its full sequence is Holliday junction branch migration complex subunit RuvB (341 aa).

The large ATPase domain (RuvB-L) stretch occupies residues 1-180 (MAKSHTLNPE…FGIQLRLDYY (180 aa)). Residues L19, R20, G61, K64, T65, T66, R170, Y180, and R217 each contribute to the ATP site. T65 contributes to the Mg(2+) binding site. Residues 181–251 (NDEEMKEIVL…LCLKAFEKMG (71 aa)) form a small ATPAse domain (RuvB-S) region. Residues 254–341 (DLGLDGMDRQ…ENHGQDPTLF (88 aa)) are head domain (RuvB-H). Residues R309 and R314 each contribute to the DNA site.

This sequence belongs to the RuvB family. Homohexamer. Forms an RuvA(8)-RuvB(12)-Holliday junction (HJ) complex. HJ DNA is sandwiched between 2 RuvA tetramers; dsDNA enters through RuvA and exits via RuvB. An RuvB hexamer assembles on each DNA strand where it exits the tetramer. Each RuvB hexamer is contacted by two RuvA subunits (via domain III) on 2 adjacent RuvB subunits; this complex drives branch migration. In the full resolvosome a probable DNA-RuvA(4)-RuvB(12)-RuvC(2) complex forms which resolves the HJ.

Its subcellular location is the cytoplasm. It carries out the reaction ATP + H2O = ADP + phosphate + H(+). Its function is as follows. The RuvA-RuvB-RuvC complex processes Holliday junction (HJ) DNA during genetic recombination and DNA repair, while the RuvA-RuvB complex plays an important role in the rescue of blocked DNA replication forks via replication fork reversal (RFR). RuvA specifically binds to HJ cruciform DNA, conferring on it an open structure. The RuvB hexamer acts as an ATP-dependent pump, pulling dsDNA into and through the RuvAB complex. RuvB forms 2 homohexamers on either side of HJ DNA bound by 1 or 2 RuvA tetramers; 4 subunits per hexamer contact DNA at a time. Coordinated motions by a converter formed by DNA-disengaged RuvB subunits stimulates ATP hydrolysis and nucleotide exchange. Immobilization of the converter enables RuvB to convert the ATP-contained energy into a lever motion, pulling 2 nucleotides of DNA out of the RuvA tetramer per ATP hydrolyzed, thus driving DNA branch migration. The RuvB motors rotate together with the DNA substrate, which together with the progressing nucleotide cycle form the mechanistic basis for DNA recombination by continuous HJ branch migration. Branch migration allows RuvC to scan DNA until it finds its consensus sequence, where it cleaves and resolves cruciform DNA. This is Holliday junction branch migration complex subunit RuvB from Leptospira borgpetersenii serovar Hardjo-bovis (strain JB197).